We begin with the raw amino-acid sequence, 217 residues long: Tegument protein BKRF4 (217 aa).

Positions 1–217 are disordered; that stretch reads MAMFLKSRGV…GNNNYNWPWL (217 aa). The segment covering 32-42 has biased composition (polar residues); it reads YTLGSQASQSI. Over residues 43 to 79 the composition is skewed to acidic residues; that stretch reads QEEDVSDTDESDYSDEDEEIDLEEEYPSDEDPSEGSD. The segment at 63 to 64 is interaction with host histones H3/H4; the sequence is DL. The segment at 81 to 84 is interaction with host H2A/H2B; the sequence is DPSW. Acidic residues predominate over residues 89–102; the sequence is SDESDYSESDEDEA. The segment covering 106 to 132 has biased composition (low complexity); it reads SQASRSSRVSPSTQQSSGLTPTPSFSR. Residues 136–145 show a composition bias toward pro residues; the sequence is RAPPRPPAPA. Residues 208-217 show a composition bias toward polar residues; the sequence is GNNNYNWPWL.

The protein belongs to the lymphocryptovirus BKRF4 family. As to quaternary structure, forms a complex with the host H3/H4 dimer and histone chaperone ASF1. Also forms a complex with host H2A/H2B dimer. Interacts (via C-terminus) with BGLF2; this interaction is important for infectious virion production.

It is found in the virion tegument. The protein resides in the host nucleus. It localises to the host cytoplasm. The protein localises to the host perinuclear region. Its function is as follows. Histone-binding protein that binds to histones H2A/H2B, H3/H4 and cellular chromatin to overcome the host DNA damage response triggered by the viral genome ends. Interferes with histone ubiquitination and recruitment of repair proteins. In Epstein-Barr virus (strain GD1) (HHV-4), this protein is Tegument protein BKRF4.